Here is an 87-residue protein sequence, read N- to C-terminus: Small ribosomal subunit protein uS17 (87 aa).

It belongs to the universal ribosomal protein uS17 family. Part of the 30S ribosomal subunit.

Functionally, one of the primary rRNA binding proteins, it binds specifically to the 5'-end of 16S ribosomal RNA. The protein is Small ribosomal subunit protein uS17 of Aster yellows witches'-broom phytoplasma (strain AYWB).